Reading from the N-terminus, the 300-residue chain is Ankyrin repeat domain-containing protein 54 (300 aa).

The disordered stretch occupies residues 1–27; the sequence is MAAAAGDADDEPRSGHSSSEGECAVAP. An N-acetylalanine modification is found at Ala-2. 2 positions are modified to phosphoserine: Ser-58 and Ser-63. Residues 99–117 carry the Nuclear localization signal (NLS) motif; that stretch reads RRLGPTGKEVHALKRLRDS. 4 ANK repeats span residues 109–138, 142–171, 175–204, and 208–244; these read HALKRLRDSANANDVETVQQLLEDGADPCA, KGRTALHFASCNGNDQIVQLLLDHGADPNQ, LGNTPLHLAACTNHVPVITTLLRGGARVDA, and AGRTPLHLAKSKLNILQEGHAQCLEAVRLEVKQIIHM. The tract at residues 141 to 241 is LYN-binding; that stretch reads DKGRTALHFA…EAVRLEVKQI (101 aa). Positions 283 to 293 match the Nuclear export signal (NES) motif; that stretch reads LLASFTSLSLQ.

As to quaternary structure, interacts (via ankyrin repeat region) with LYN (via SH3-domain) in an activation-independent status of LYN. Forms a multiprotein complex with LYN and HCLS1. Interacts with TSN2, VAV1, DBNL and LASP1.

Its subcellular location is the nucleus. The protein resides in the cytoplasm. The protein localises to the midbody. Functionally, plays an important role in regulating intracellular signaling events associated with erythroid terminal differentiation. The polypeptide is Ankyrin repeat domain-containing protein 54 (ANKRD54) (Homo sapiens (Human)).